Reading from the N-terminus, the 620-residue chain is 1-deoxy-D-xylulose-5-phosphate synthase (620 aa).

Thiamine diphosphate is bound by residues His-80 and Gly-121–Ser-123. Residue Asp-152 participates in Mg(2+) binding. Thiamine diphosphate is bound by residues Gly-153 to Ala-154, Asn-181, Tyr-288, and Glu-370. Asn-181 provides a ligand contact to Mg(2+).

This sequence belongs to the transketolase family. DXPS subfamily. Homodimer. Mg(2+) serves as cofactor. The cofactor is thiamine diphosphate.

It carries out the reaction D-glyceraldehyde 3-phosphate + pyruvate + H(+) = 1-deoxy-D-xylulose 5-phosphate + CO2. The protein operates within metabolic intermediate biosynthesis; 1-deoxy-D-xylulose 5-phosphate biosynthesis; 1-deoxy-D-xylulose 5-phosphate from D-glyceraldehyde 3-phosphate and pyruvate: step 1/1. Functionally, catalyzes the acyloin condensation reaction between C atoms 2 and 3 of pyruvate and glyceraldehyde 3-phosphate to yield 1-deoxy-D-xylulose-5-phosphate (DXP). The polypeptide is 1-deoxy-D-xylulose-5-phosphate synthase (Escherichia coli O127:H6 (strain E2348/69 / EPEC)).